The following is a 90-amino-acid chain: ATP synthase subunit e, mitochondrial (90 aa).

At Ser-2 the chain carries N-acetylserine. Residues Val-7–His-23 form a helical membrane-spanning segment.

F-type ATP synthases have 2 components, the catalytic core F(1) and the membrane-embedded component F(0), linked together by a central stalk and a peripheral stalk. The central stalk, also called rotor shaft, is often seen as part of F(1). The peripheral stalk is seen as part of F(0). F(0) contains the membrane channel next to the rotor. F-type ATP synthases form dimers but each monomer functions independently in ATP generation. The dimer consists of 17 different polypeptides: ATP1 (subunit alpha, 3 molecules per monomer, part of F(1)), ATP2 (subunit beta, 3 copies per monomer, part of F(1)), ATP3 (subunit gamma, part of the central stalk), ATP4 (subunit b, part of the peripheral stalk), ATP5/OSCP (subunit 5/OSCP, part of the peripheral stalk), ATP6 (subunit a, part of the peripheral stalk), ATP7 (subunit d, part of the peripheral stalk), ATP8 (subunit 8, part of the peripheral stalk), OLI1 (subunit c, part of the rotor, 10 molecules per monomer), ATP14 (subunit h, part of the peripheral stalk), ATP15 (subunit epsilon, part of the central stalk), ATP16 (subunit delta, part of the central stalk), ATP17 (subunit f, part of the peripheral stalk), ATP18 (subunit i/j, part of the peripheral stalk), ATP19 (subunit k, dimer-specific, at interface between monomers), ATP20 (subunit g, at interface between monomers), TIM11 (subunit e, at interface between monomers).

It localises to the mitochondrion inner membrane. Functionally, mitochondrial membrane ATP synthase (F(1)F(0) ATP synthase or Complex V) produces ATP from ADP in the presence of a proton gradient across the membrane which is generated by electron transport complexes of the respiratory chain. F-type ATP synthases consist of two structural domains, F(1) - containing the extramembraneous catalytic core, and F(0) - containing the membrane proton channel, linked together by a central stalk and a peripheral stalk. During catalysis, ATP synthesis in the catalytic domain of F(1) is coupled via a rotary mechanism of the central stalk subunits to proton translocation. Part of the complex F(0) domain. Minor subunit located with subunit a/ATP6 in the membrane. Together with subunit g/ATP20, probably contributes to membrane curvature at the site of the ATP synthase dimer, ultimately contributing to formation of cristae. This is ATP synthase subunit e, mitochondrial from Yarrowia lipolytica (strain CLIB 122 / E 150) (Yeast).